A 126-amino-acid chain; its full sequence is Thioredoxin domain-containing protein, mitochondrial (126 aa).

The Thioredoxin domain occupies 14–120; it reads SQKIATNTSF…ILEFLNHIET (107 aa).

This sequence belongs to the thioredoxin family.

Its subcellular location is the mitochondrion. This is Thioredoxin domain-containing protein, mitochondrial from Dictyostelium discoideum (Social amoeba).